Reading from the N-terminus, the 869-residue chain is DNA mismatch repair protein MutS (869 aa).

ATP is bound at residue Gly-602–Ser-609.

The protein belongs to the DNA mismatch repair MutS family.

Functionally, this protein is involved in the repair of mismatches in DNA. It is possible that it carries out the mismatch recognition step. This protein has a weak ATPase activity. The polypeptide is DNA mismatch repair protein MutS (Staphylococcus carnosus (strain TM300)).